The sequence spans 455 residues: Chromosomal replication initiator protein DnaA 2 (455 aa).

Residues 1-95 are domain I, interacts with DnaA modulators; that stretch reads MLTCNDCSTW…KRSSPLVTPS (95 aa). Positions 96–112 are domain II; the sequence is IAKPATEVSEENKDFQL. The interval 113-328 is domain III, AAA+ region; the sequence is KLNGAYRFDN…GAINKLTAYC (216 aa). Positions 157, 159, 160, and 161 each coordinate ATP. The interval 329 to 455 is domain IV, binds dsDNA; the sequence is LLFNKPLTET…IAIDSPQHFV (127 aa).

This sequence belongs to the DnaA family. As to quaternary structure, oligomerizes as a right-handed, spiral filament on DNA at oriC.

The protein resides in the cytoplasm. Functionally, plays an essential role in the initiation and regulation of chromosomal replication. ATP-DnaA binds to the origin of replication (oriC) to initiate formation of the DNA replication initiation complex once per cell cycle. Binds the DnaA box (a 9 base pair repeat at the origin) and separates the double-stranded (ds)DNA. Forms a right-handed helical filament on oriC DNA; dsDNA binds to the exterior of the filament while single-stranded (ss)DNA is stabiized in the filament's interior. The ATP-DnaA-oriC complex binds and stabilizes one strand of the AT-rich DNA unwinding element (DUE), permitting loading of DNA polymerase. After initiation quickly degrades to an ADP-DnaA complex that is not apt for DNA replication. Binds acidic phospholipids. In Chlamydia trachomatis serovar D (strain ATCC VR-885 / DSM 19411 / UW-3/Cx), this protein is Chromosomal replication initiator protein DnaA 2.